A 507-amino-acid polypeptide reads, in one-letter code: AMP phosphorylase (507 aa).

AMP-binding positions include Gly168, 194–199 (SRAITG), and Thr203. Asp256 acts as the Proton donor in catalysis. Positions 264 and 288 each coordinate AMP.

The protein belongs to the thymidine/pyrimidine-nucleoside phosphorylase family. Type 2 subfamily.

The catalysed reaction is AMP + phosphate = alpha-D-ribose 1,5-bisphosphate + adenine. It catalyses the reaction CMP + phosphate = cytosine + alpha-D-ribose 1,5-bisphosphate. The enzyme catalyses UMP + phosphate = alpha-D-ribose 1,5-bisphosphate + uracil. Catalyzes the conversion of AMP and phosphate to adenine and ribose 1,5-bisphosphate (R15P). Exhibits phosphorylase activity toward CMP and UMP in addition to AMP. Functions in an archaeal AMP degradation pathway, together with R15P isomerase and RubisCO. This is AMP phosphorylase from Methanosarcina mazei (strain ATCC BAA-159 / DSM 3647 / Goe1 / Go1 / JCM 11833 / OCM 88) (Methanosarcina frisia).